The sequence spans 90 residues: Small ribosomal subunit protein uS15 (90 aa).

The protein belongs to the universal ribosomal protein uS15 family. As to quaternary structure, part of the 30S ribosomal subunit. Forms a bridge to the 50S subunit in the 70S ribosome, contacting the 23S rRNA.

Functionally, one of the primary rRNA binding proteins, it binds directly to 16S rRNA where it helps nucleate assembly of the platform of the 30S subunit by binding and bridging several RNA helices of the 16S rRNA. Its function is as follows. Forms an intersubunit bridge (bridge B4) with the 23S rRNA of the 50S subunit in the ribosome. This is Small ribosomal subunit protein uS15 from Helicobacter pylori (strain HPAG1).